Consider the following 255-residue polypeptide: MSMPFYVSPEQLMKDRADYARKGIARGRSVVVAAYDGGIAFATENPSRALHKISEIYDRIAFAAVGKYNEFENLRVAGVRYADLRGYSYDRSDVDARGLANAYAQTLGTVFTTESKPLEVEIVVAQVGATAHDDQIYRLSYDGSVADEHGFVVMGGEAEQLGTAMTERWRPGLTLSEVLRLVREVLAGPPVDGSPREIPATHLEVAVLDRTRPRRAFRRVAGPVLDDLLASPAGTSGPTGEPGPAGTAATDGGDL.

Positions 228–255 are disordered; the sequence is LLASPAGTSGPTGEPGPAGTAATDGGDL. Low complexity predominate over residues 232-255; that stretch reads PAGTSGPTGEPGPAGTAATDGGDL.

It belongs to the peptidase T1A family. The 20S proteasome core is composed of 14 alpha and 14 beta subunits that assemble into four stacked heptameric rings, resulting in a barrel-shaped structure. The two inner rings, each composed of seven catalytic beta subunits, are sandwiched by two outer rings, each composed of seven alpha subunits. The catalytic chamber with the active sites is on the inside of the barrel. Has a gated structure, the ends of the cylinder being occluded by the N-termini of the alpha-subunits. Is capped by the proteasome-associated ATPase, ARC.

It is found in the cytoplasm. Its pathway is protein degradation; proteasomal Pup-dependent pathway. With respect to regulation, the formation of the proteasomal ATPase ARC-20S proteasome complex, likely via the docking of the C-termini of ARC into the intersubunit pockets in the alpha-rings, may trigger opening of the gate for substrate entry. Interconversion between the open-gate and close-gate conformations leads to a dynamic regulation of the 20S proteasome proteolysis activity. Its function is as follows. Component of the proteasome core, a large protease complex with broad specificity involved in protein degradation. The chain is Proteasome subunit alpha from Sanguibacter keddieii (strain ATCC 51767 / DSM 10542 / NCFB 3025 / ST-74).